We begin with the raw amino-acid sequence, 201 residues long: MALSWVLTVLSLLPLLEAQIPLCANLVPVPITNATLDRITGKWFYIASAFRNEEYNKSVQEIQATFFYFTPNKTEDTIFLREYQTRQDQCIYNTTYLNVQRENGTISRYVGGQEHFAHLLILRDTKTYMLAFDVNDEKNWGLSVYADKPETTKEQLGEFYEALDCLRIPKSDVVYTDWKKDKCEPLEKQHEKERKQEEGES.

The signal sequence occupies residues 1-18 (MALSWVLTVLSLLPLLEA). Glutamine 19 carries the pyrrolidone carboxylic acid modification. Intrachain disulfides connect cysteine 23/cysteine 165 and cysteine 90/cysteine 183. Asparagine 33 carries an N-linked (GlcNAc...) (complex) asparagine glycan. N-linked (GlcNAc...) asparagine glycosylation occurs at asparagine 56. A glycan (N-linked (GlcNAc...) (complex) asparagine) is linked at asparagine 72. N-linked (GlcNAc...) asparagine glycosylation is found at asparagine 93 and asparagine 103.

This sequence belongs to the calycin superfamily. Lipocalin family. In terms of processing, N-glycosylated. N-glycan heterogeneity at Asn-33: Hex5HexNAc4 (minor), Hex6HexNAc5 (major) and dHex1Hex6HexNAc5 (minor). Expressed by the liver and secreted in plasma.

The protein resides in the secreted. Its function is as follows. Functions as a transport protein in the blood stream. Binds various ligands in the interior of its beta-barrel domain. Also binds synthetic drugs and influences their distribution and availability in the body. Appears to function in modulating the activity of the immune system during the acute-phase reaction. In Homo sapiens (Human), this protein is Alpha-1-acid glycoprotein 1 (ORM1).